Reading from the N-terminus, the 198-residue chain is Probable chorismate pyruvate-lyase (198 aa).

Residues arginine 76, leucine 114, and glutamate 172 each contribute to the substrate site.

This sequence belongs to the UbiC family.

It is found in the cytoplasm. The enzyme catalyses chorismate = 4-hydroxybenzoate + pyruvate. The protein operates within cofactor biosynthesis; ubiquinone biosynthesis. Its function is as follows. Removes the pyruvyl group from chorismate, with concomitant aromatization of the ring, to provide 4-hydroxybenzoate (4HB) for the ubiquinone pathway. This chain is Probable chorismate pyruvate-lyase, found in Bordetella avium (strain 197N).